The chain runs to 936 residues: Protein NNF2 (936 aa).

Residues 1–41 lie on the Lumenal side of the membrane; it reads MEEQFTNQKKVSHLQSLMNTKRSEQPTEFAKKHRFKDTLAL. K10 is covalently cross-linked (Glycyl lysine isopeptide (Lys-Gly) (interchain with G-Cter in ubiquitin)). A helical transmembrane segment spans residues 42 to 62; that stretch reads FLVFLSFNHFTSLCLLVSFIV. At 63-120 the chain is on the cytoplasmic side; sequence ATKCKDFLANCFIILFLSKKPSRHIGEVAHIDISTSKVTNGSSNRKSNSRFFGNSKNS. Residues 121 to 141 traverse the membrane as a helical segment; it reads FVIPIPVLICEILFAMLLKIY. At 142–245 the chain is on the lumenal side; it reads GGDYFVKPIK…FKMLGKHSDS (104 aa). The chain crosses the membrane as a helical span at residues 246–266; sequence MIYYLSFHILFFSFASSLLHP. Topologically, residues 267 to 936 are cytoplasmic; the sequence is HRQTAENKPL…NIHSLIGNSY (670 aa). 3 disordered regions span residues 297–351, 387–437, and 512–533; these read RISS…SNIL, GSNS…DFFS, and TSENSLTPTNSNTSYVSNQEKH. Residues 299-308 show a composition bias toward low complexity; sequence SSSSSVSADS. Positions 325–351 are enriched in polar residues; sequence LSSSNQTIHPSQQNNSPVPLSSHSNIL. 2 stretches are compositionally biased toward low complexity: residues 394–405 and 414–428; these read TTTTSTTTSPTT and SLSNEISLSDSSNGN. Over residues 512 to 529 the composition is skewed to polar residues; it reads TSENSLTPTNSNTSYVSN.

It localises to the endoplasmic reticulum membrane. This chain is Protein NNF2 (NNF2), found in Saccharomyces cerevisiae (strain ATCC 204508 / S288c) (Baker's yeast).